We begin with the raw amino-acid sequence, 591 residues long: MVATSKQTTQGYVVEAYGNLLRVHVDGHVRQGEVAYVSVDNTWLKAEIIEVVGDEVKIQVFEETQGISRGALVTFSGHLLEAELGPGLLQGIFDGLQNRLEILADTSLFLRRGEYVNAICRETVWAYTQKASVGSVLSRGDVLGTVKEGRFDHKIMVPFSCFEEVTITWVISSGNYTVDTVVAKGRTSTGEELEFTMVQKWPIKQAFLEGEKVPSHEIMDVGLRVLDTQIPVLKGGTFCTPGPFGAGKTVLQHHLSKYAAVDIVVLCACGERAGEVVEILQEFPHLKDPHTGQSLMHRTCIICNTSSMPVAARESSIYLGITIAEYYRQMGLHILLLADSTSRWAQALREISGRLEEIPGEEAFPAYLASRIAAFYERGGAVKMKDGSEGSLTICGAVSPAGGNFEEPVTQATLSVVGAFCGLSKARADARRYPSIDPMISWSKYLDSVAEILEKKVPGWGESVKQASRFLEEGAEIGKRIEVVGEEGISMEDMEIFLKSELYDFCYLQQNAFDAEDCYCPFDRQIELFSLMNHIFNSRFCFDCPDNARSFFLELQSKIKTLNGQKFLSEEYQKGLEVIYKLLESKMVQTA.

242 to 249 provides a ligand contact to ATP; sequence GPFGAGKT.

This sequence belongs to the ATPase alpha/beta chains family.

The enzyme catalyses ATP + H2O + 4 H(+)(in) = ADP + phosphate + 5 H(+)(out). Produces ATP from ADP in the presence of a proton gradient across the membrane. The V-type alpha chain is a catalytic subunit. In Chlamydia trachomatis serovar L2 (strain ATCC VR-902B / DSM 19102 / 434/Bu), this protein is V-type ATP synthase alpha chain.